The sequence spans 189 residues: Molybdenum cofactor guanylyltransferase (189 aa).

GTP contacts are provided by residues 10–12 (LAG), lysine 23, asparagine 51, aspartate 69, and aspartate 99. Aspartate 99 contributes to the Mg(2+) binding site.

The protein belongs to the MobA family. Monomer. Mg(2+) serves as cofactor.

It localises to the cytoplasm. It catalyses the reaction Mo-molybdopterin + GTP + H(+) = Mo-molybdopterin guanine dinucleotide + diphosphate. In terms of biological role, transfers a GMP moiety from GTP to Mo-molybdopterin (Mo-MPT) cofactor (Moco or molybdenum cofactor) to form Mo-molybdopterin guanine dinucleotide (Mo-MGD) cofactor. The chain is Molybdenum cofactor guanylyltransferase from Pasteurella multocida (strain Pm70).